We begin with the raw amino-acid sequence, 473 residues long: Photosystem II CP43 reaction center protein (473 aa).

A propeptide spanning residues 1-14 (MKTLYSLRRFYPVE) is cleaved from the precursor. T15 carries the N-acetylthreonine modification. Residue T15 is modified to Phosphothreonine. 5 helical membrane-spanning segments follow: residues 69 to 93 (LFEV…PHLA), 134 to 155 (LLGP…KDRN), 178 to 200 (KALY…RKIT), 255 to 275 (KPFA…LSYS), and 291 to 312 (WFNN…ASQA). E367 serves as a coordination point for [CaMn4O5] cluster. A helical membrane pass occupies residues 447-471 (RARAAAAGFEKGIDRDFEPVLSMTP).

Belongs to the PsbB/PsbC family. PsbC subfamily. In terms of assembly, PSII is composed of 1 copy each of membrane proteins PsbA, PsbB, PsbC, PsbD, PsbE, PsbF, PsbH, PsbI, PsbJ, PsbK, PsbL, PsbM, PsbT, PsbX, PsbY, PsbZ, Psb30/Ycf12, at least 3 peripheral proteins of the oxygen-evolving complex and a large number of cofactors. It forms dimeric complexes. Requires Binds multiple chlorophylls and provides some of the ligands for the Ca-4Mn-5O cluster of the oxygen-evolving complex. It may also provide a ligand for a Cl- that is required for oxygen evolution. PSII binds additional chlorophylls, carotenoids and specific lipids. as cofactor.

Its subcellular location is the plastid. The protein resides in the chloroplast thylakoid membrane. Its function is as follows. One of the components of the core complex of photosystem II (PSII). It binds chlorophyll and helps catalyze the primary light-induced photochemical processes of PSII. PSII is a light-driven water:plastoquinone oxidoreductase, using light energy to abstract electrons from H(2)O, generating O(2) and a proton gradient subsequently used for ATP formation. The sequence is that of Photosystem II CP43 reaction center protein from Drimys granadensis.